Here is a 266-residue protein sequence, read N- to C-terminus: Putative carbamate hydrolase RutD (266 aa).

Residues proline 14–leucine 115 enclose the AB hydrolase-1 domain.

The protein belongs to the AB hydrolase superfamily. Hydrolase RutD family.

It catalyses the reaction carbamate + 2 H(+) = NH4(+) + CO2. Involved in pyrimidine catabolism. May facilitate the hydrolysis of carbamate, a reaction that can also occur spontaneously. This chain is Putative carbamate hydrolase RutD, found in Shigella sonnei (strain Ss046).